The chain runs to 85 residues: Toxin Cll7 (85 aa).

An N-terminal signal peptide occupies residues 1-19; the sequence is MNSLLMITACLVLFGTVWA. The region spanning 20-83 is the LCN-type CS-alpha/beta domain; sequence KEGYLVNTYT…TWPLPNKTCG (64 aa). Intrachain disulfides connect cysteine 31-cysteine 82, cysteine 35-cysteine 58, cysteine 44-cysteine 63, and cysteine 48-cysteine 65.

The protein belongs to the long (4 C-C) scorpion toxin superfamily. Sodium channel inhibitor family. Beta subfamily. As to expression, expressed by the venom gland.

It is found in the secreted. In terms of biological role, beta toxins bind voltage-independently at site-4 of sodium channels (Nav) and shift the voltage of activation toward more negative potentials thereby affecting sodium channel activation and promoting spontaneous and repetitive firing. The chain is Toxin Cll7 from Centruroides limpidus (Mexican scorpion).